The primary structure comprises 361 residues: Aminomethyltransferase (361 aa).

The protein belongs to the GcvT family. The glycine cleavage system is composed of four proteins: P, T, L and H.

The enzyme catalyses N(6)-[(R)-S(8)-aminomethyldihydrolipoyl]-L-lysyl-[protein] + (6S)-5,6,7,8-tetrahydrofolate = N(6)-[(R)-dihydrolipoyl]-L-lysyl-[protein] + (6R)-5,10-methylene-5,6,7,8-tetrahydrofolate + NH4(+). In terms of biological role, the glycine cleavage system catalyzes the degradation of glycine. This is Aminomethyltransferase from Bacteroides fragilis (strain ATCC 25285 / DSM 2151 / CCUG 4856 / JCM 11019 / LMG 10263 / NCTC 9343 / Onslow / VPI 2553 / EN-2).